The sequence spans 872 residues: Bifunctional heparan sulfate N-deacetylase/N-sulfotransferase 4 (872 aa).

Topologically, residues 1-13 (MNLILKFRRSFRT) are cytoplasmic. A helical; Signal-anchor for type II membrane protein membrane pass occupies residues 14–34 (LIVLLATFCLVSILISAYFLY). Over 35–872 (SGYKQEMTLI…WLRQELQKVR (838 aa)) the chain is Lumenal. Positions 36–588 (GYKQEMTLIE…KRHKDIWSRE (553 aa)) are heparan sulfate N-deacetylase 4. Residues Asn-226, Asn-341, and Asn-391 are each glycosylated (N-linked (GlcNAc...) asparagine). Residues 589–872 (KTCDHLPKFL…WLRQELQKVR (284 aa)) form a heparan sulfate N-sulfotransferase 4 region. Lys-604 (for sulfotransferase activity) is an active-site residue. Residue 604-608 (KTGTT) participates in 3'-phosphoadenylyl sulfate binding. Residue Asn-657 is glycosylated (N-linked (GlcNAc...) asparagine). Ser-702 lines the 3'-phosphoadenylyl sulfate pocket. A glycan (N-linked (GlcNAc...) asparagine) is linked at Asn-793. Cys-808 and Cys-818 are disulfide-bonded. 823–827 (KGRKY) lines the 3'-phosphoadenylyl sulfate pocket.

The protein belongs to the sulfotransferase 1 family. NDST subfamily. As to quaternary structure, monomer. As to expression, expressed at low level in brain and throughout embryogenesis. Not expressed in other tissues.

Its subcellular location is the golgi apparatus membrane. It catalyses the reaction alpha-D-glucosaminyl-[heparan sulfate](n) + 3'-phosphoadenylyl sulfate = N-sulfo-alpha-D-glucosaminyl-[heparan sulfate](n) + adenosine 3',5'-bisphosphate + 2 H(+). It participates in glycan metabolism; heparan sulfate biosynthesis. It functions in the pathway glycan metabolism; heparin biosynthesis. In terms of biological role, essential bifunctional enzyme that catalyzes both the N-deacetylation and the N-sulfation of glucosamine (GlcNAc) of the glycosaminoglycan in heparan sulfate. Modifies the GlcNAc-GlcA disaccharide repeating sugar backbone to make N-sulfated heparosan, a prerequisite substrate for later modifications in heparin biosynthesis. Has low deacetylase activity but high sulfotransferase activity. The chain is Bifunctional heparan sulfate N-deacetylase/N-sulfotransferase 4 (Ndst4) from Mus musculus (Mouse).